A 281-amino-acid polypeptide reads, in one-letter code: sn-glycerol-3-phosphate transport system permease protein UgpE (281 aa).

Transmembrane regions (helical) follow at residues 16–36 (LILG…AATL), 85–105 (FSIT…IVWF), 113–133 (FFWM…FPTV), 142–162 (LDSY…TFLF), 202–222 (ALFV…LLII), and 247–267 (WNQV…IVLA). In terms of domain architecture, ABC transmembrane type-1 spans 77–268 (MLNSFIMAFS…IPPVVIVLAM (192 aa)).

Belongs to the binding-protein-dependent transport system permease family. UgpAE subfamily. As to quaternary structure, the complex is composed of two ATP-binding proteins (UgpC), two transmembrane proteins (UgpA and UgpE) and a solute-binding protein (UgpB).

Its subcellular location is the cell inner membrane. In terms of biological role, part of the ABC transporter complex UgpBAEC involved in sn-glycerol-3-phosphate (G3P) import. Probably responsible for the translocation of the substrate across the membrane. The sequence is that of sn-glycerol-3-phosphate transport system permease protein UgpE (ugpE) from Salmonella choleraesuis (strain SC-B67).